The following is a 330-amino-acid chain: Nodulation protein D 2 (330 aa).

Positions 6-63 (LDLNLLVALDALITERNLSSAARKINLSQPAMSAAVARLRKHFRDELFGMRGRELVLS) constitute an HTH lysR-type domain. Positions 23-42 (LSSAARKINLSQPAMSAAVA) form a DNA-binding region, H-T-H motif. A disordered region spans residues 308-330 (RVTSSPEDAEPPGHFVRSVSPLP).

The protein belongs to the LysR transcriptional regulatory family.

NodD regulates the expression of the nodABCFE genes which encode other nodulation proteins. NodD is also a negative regulator of its own expression. Binds flavonoids as inducers. The sequence is that of Nodulation protein D 2 (nodD2) from Bradyrhizobium diazoefficiens (strain JCM 10833 / BCRC 13528 / IAM 13628 / NBRC 14792 / USDA 110).